The chain runs to 279 residues: Pantothenate synthetase (279 aa).

26-33 lines the ATP pocket; sequence MGNLHDGH. Catalysis depends on H33, which acts as the Proton donor. Residue Q57 participates in (R)-pantoate binding. Q57 serves as a coordination point for beta-alanine. Position 144–147 (144–147) interacts with ATP; it reads GKKD. A (R)-pantoate-binding site is contributed by Q150. Residues V173 and 181–184 contribute to the ATP site; that span reads LSSR.

This sequence belongs to the pantothenate synthetase family. Homodimer.

Its subcellular location is the cytoplasm. It catalyses the reaction (R)-pantoate + beta-alanine + ATP = (R)-pantothenate + AMP + diphosphate + H(+). It functions in the pathway cofactor biosynthesis; (R)-pantothenate biosynthesis; (R)-pantothenate from (R)-pantoate and beta-alanine: step 1/1. In terms of biological role, catalyzes the condensation of pantoate with beta-alanine in an ATP-dependent reaction via a pantoyl-adenylate intermediate. In Burkholderia mallei (strain NCTC 10229), this protein is Pantothenate synthetase.